The sequence spans 177 residues: ATP synthase subunit delta (177 aa).

It belongs to the ATPase delta chain family. F-type ATPases have 2 components, F(1) - the catalytic core - and F(0) - the membrane proton channel. F(1) has five subunits: alpha(3), beta(3), gamma(1), delta(1), epsilon(1). F(0) has three main subunits: a(1), b(2) and c(10-14). The alpha and beta chains form an alternating ring which encloses part of the gamma chain. F(1) is attached to F(0) by a central stalk formed by the gamma and epsilon chains, while a peripheral stalk is formed by the delta and b chains.

The protein resides in the cell inner membrane. F(1)F(0) ATP synthase produces ATP from ADP in the presence of a proton or sodium gradient. F-type ATPases consist of two structural domains, F(1) containing the extramembraneous catalytic core and F(0) containing the membrane proton channel, linked together by a central stalk and a peripheral stalk. During catalysis, ATP synthesis in the catalytic domain of F(1) is coupled via a rotary mechanism of the central stalk subunits to proton translocation. In terms of biological role, this protein is part of the stalk that links CF(0) to CF(1). It either transmits conformational changes from CF(0) to CF(1) or is implicated in proton conduction. This chain is ATP synthase subunit delta, found in Shewanella putrefaciens (strain CN-32 / ATCC BAA-453).